The sequence spans 139 residues: MSSGVKVSQECLDKFQELKLGKKIKYIIYSLNDKNTEIVVQNTSTSTSYDDFLAELPPTECRYAIYDFEYEKGDAGKRNKICFFSWSPDDAKIKPKMVFASSKDALRKALVGISTEIQGTDFSEVSYDTVLDKVSRSTF.

Positions 4–135 (GVKVSQECLD…SYDTVLDKVS (132 aa)) constitute an ADF-H domain.

This sequence belongs to the actin-binding proteins ADF family.

It is found in the cytoplasm. It localises to the cytoskeleton. Its subcellular location is the nucleus matrix. Its function is as follows. Controls reversibly actin polymerization and depolymerization in a pH-sensitive manner. It has the ability to bind G- and F-actin in a 1:1 ratio of cofilin to actin. Binding to F-actin is regulated by tropomyosin. It is the major component of intranuclear and cytoplasmic actin rods. Required for accumulation of actin at the cell division site via depolymerizing actin at the cell ends. In association with myosin II has a role in the assembly of the contractile ring via severing actin filaments. Involved in the maintenance of the contractile ring once formed. In association with profilin and capping protein, has a role in the mitotic reorganization of the actin cytoskeleton. The polypeptide is Cofilin (COF1) (Mycosarcoma maydis (Corn smut fungus)).